The following is an 821-amino-acid chain: MAPKQKDDDFVLTLSDDENDAFNNFDVDGDDGDDGDELASSGTKKRKRDTAETTQNTSKKQKQQKPVKNGLKKNKKGQAETPAEEEQEEPQEEEDAGEDDGALDSDFEFDVGGVANTVVEGFDGWGMGNAEDEGAAKKGDKKAVDIDDIISRRQAKKEAAEAKKKKKQSEAQDNESWDGVAEDEDAESDGGMSVDFQDDELLAADGFGMGADGEDESDNEEAQDESGSDNDSDDDEEKDSEDDDDEAASDNDSVATPVGHPEDEASDNDSDAESEIDAEEQEKRKAFFAPEEEKTKEQADGAQRSFQEFNLSRPILRGLAAVNFTNPTPIQRKTIPVALLGKDIVGSAVTGSGKTAAFVVPILERLLFRPRKVPTSRVAILMPTRELAVQCYNVATKLATYTDITFCQLVGGFSLREQENILKKRPDVIIATPGRFIDHMRNSASFTVDTLEILVLDEADRMLEDGFADELNEILTTIPKSRQTMLFSATMTDTVDKLIRVGLNRPVRLMVDSKKNTSLTLVQEFVRLRPGREDKRLGYLLYLCKEIYTGRVIVFFRQKREAHRVRIVFGLLGLKAAELHGSMSQEQRIKSVENFRDGKVAFLLATDLASRGLDIKGVETVINYEAPQSHEIYLHRVGRTARAGRSGRACTIAAEPDRKVVKAAVKASKAQGAKVASRVVDPAVADQWAKKAADLEEEINEVLEEEKTEKQLAQAEMQVTKGENLIKHEAEIMSRPKRTWFESEKDKRAARKLGAAQLNGPDAGLSKKEKVKLSNKDKKRLDDARQRLEGKAGWKKGKAEREAPKPAKGKGKGKDKKKGKN.

The tract at residues 1-304 is disordered; it reads MAPKQKDDDF…TKEQADGAQR (304 aa). The span at 27-37 shows a compositional bias: acidic residues; that stretch reads VDGDDGDDGDE. The span at 59 to 76 shows a compositional bias: basic residues; it reads KKQKQQKPVKNGLKKNKK. Acidic residues predominate over residues 82-109; that stretch reads PAEEEQEEPQEEEDAGEDDGALDSDFEF. Basic and acidic residues predominate over residues 134-162; it reads GAAKKGDKKAVDIDDIISRRQAKKEAAEA. Acidic residues-rich tracts occupy residues 172 to 188, 212 to 249, and 264 to 280; these read QDNE…DAES, DGED…EAAS, and EASD…DAEE. The span at 281–299 shows a compositional bias: basic and acidic residues; that stretch reads QEKRKAFFAPEEEKTKEQA. Positions 304 to 332 match the Q motif motif; sequence RSFQEFNLSRPILRGLAAVNFTNPTPIQR. In terms of domain architecture, Helicase ATP-binding spans 335–509; the sequence is IPVALLGKDI…RVGLNRPVRL (175 aa). Residue 348-355 coordinates ATP; it reads AVTGSGKT. The short motif at 457 to 460 is the DEAD box element; that stretch reads DEAD. Residues 536 to 683 enclose the Helicase C-terminal domain; that stretch reads RLGYLLYLCK…KVASRVVDPA (148 aa). Residues 754–821 are disordered; the sequence is GAAQLNGPDA…KGKDKKKGKN (68 aa). Basic and acidic residues predominate over residues 765–805; that stretch reads LSKKEKVKLSNKDKKRLDDARQRLEGKAGWKKGKAEREAPK. Residues 807–821 show a composition bias toward basic residues; that stretch reads AKGKGKGKDKKKGKN.

The protein belongs to the DEAD box helicase family. DDX27/DRS1 subfamily. Associates with pre-ribosomal particles.

It is found in the nucleus. The protein resides in the nucleolus. The catalysed reaction is ATP + H2O = ADP + phosphate + H(+). In terms of biological role, ATP-binding RNA helicase involved in ribosome assembly. The sequence is that of ATP-dependent RNA helicase drs1 (drs1) from Aspergillus terreus (strain NIH 2624 / FGSC A1156).